The primary structure comprises 600 residues: ATP-dependent lipid A-core flippase (600 aa).

The next 4 helical transmembrane spans lie at valine 26–leucine 46, leucine 82–leucine 102, valine 167–isoleucine 187, and proline 266–leucine 286. Residues leucine 30–lysine 321 enclose the ABC transmembrane type-1 domain. The 237-residue stretch at leucine 353 to methionine 589 folds into the ABC transporter domain. ATP is bound at residue glycine 387–serine 394.

The protein belongs to the ABC transporter superfamily. Lipid exporter (TC 3.A.1.106) family. In terms of assembly, homodimer.

It localises to the cell inner membrane. The catalysed reaction is ATP + H2O + lipid A-core oligosaccharideSide 1 = ADP + phosphate + lipid A-core oligosaccharideSide 2.. Functionally, involved in lipopolysaccharide (LPS) biosynthesis. Translocates lipid A-core from the inner to the outer leaflet of the inner membrane. Transmembrane domains (TMD) form a pore in the inner membrane and the ATP-binding domain (NBD) is responsible for energy generation. The sequence is that of ATP-dependent lipid A-core flippase from Pseudomonas savastanoi pv. phaseolicola (strain 1448A / Race 6) (Pseudomonas syringae pv. phaseolicola (strain 1448A / Race 6)).